The chain runs to 295 residues: ATP synthase gamma chain (295 aa).

It belongs to the ATPase gamma chain family. As to quaternary structure, F-type ATPases have 2 components, CF(1) - the catalytic core - and CF(0) - the membrane proton channel. CF(1) has five subunits: alpha(3), beta(3), gamma(1), delta(1), epsilon(1). CF(0) has three main subunits: a, b and c.

The protein resides in the cell inner membrane. Functionally, produces ATP from ADP in the presence of a proton gradient across the membrane. The gamma chain is believed to be important in regulating ATPase activity and the flow of protons through the CF(0) complex. The polypeptide is ATP synthase gamma chain (Cytophaga hutchinsonii (strain ATCC 33406 / DSM 1761 / CIP 103989 / NBRC 15051 / NCIMB 9469 / D465)).